A 104-amino-acid polypeptide reads, in one-letter code: Large ribosomal subunit protein bL21 (104 aa).

Belongs to the bacterial ribosomal protein bL21 family. Part of the 50S ribosomal subunit. Contacts protein L20.

In terms of biological role, this protein binds to 23S rRNA in the presence of protein L20. This is Large ribosomal subunit protein bL21 from Streptococcus agalactiae serotype Ia (strain ATCC 27591 / A909 / CDC SS700).